The chain runs to 1372 residues: DNA-directed RNA polymerase subunit beta' (1372 aa).

Zn(2+)-binding residues include C69, C71, C84, and C87. Mg(2+)-binding residues include D460, D462, and D464. Residues C808, C882, C889, and C892 each contribute to the Zn(2+) site.

This sequence belongs to the RNA polymerase beta' chain family. The RNAP catalytic core consists of 2 alpha, 1 beta, 1 beta' and 1 omega subunit. When a sigma factor is associated with the core the holoenzyme is formed, which can initiate transcription. Mg(2+) is required as a cofactor. Zn(2+) serves as cofactor.

It carries out the reaction RNA(n) + a ribonucleoside 5'-triphosphate = RNA(n+1) + diphosphate. DNA-dependent RNA polymerase catalyzes the transcription of DNA into RNA using the four ribonucleoside triphosphates as substrates. This chain is DNA-directed RNA polymerase subunit beta', found in Rickettsia prowazekii (strain Madrid E).